The sequence spans 100 residues: Putative protein adenylyltransferase MJ0604 (100 aa).

The short motif at 29–43 is the GSX(10)DXD motif element; it reads GSYARGDYTEESDID. Residues Asp-41 and Asp-43 each contribute to the Mg(2+) site.

This sequence belongs to the MntA antitoxin family. Requires Mg(2+) as cofactor.

It catalyses the reaction L-tyrosyl-[protein] + ATP = O-(5'-adenylyl)-L-tyrosyl-[protein] + diphosphate. The catalysed reaction is O-(5'-adenylyl)-L-tyrosyl-[protein] + ATP = O-[5'-(adenylyl-(5'-&gt;3')-adenylyl)]-L-tyrosyl-[protein] + diphosphate. Its function is as follows. Putative antitoxin component of a putative type VII toxin-antitoxin (TA) system. Its cognate toxin might be MJ0605, which it might AMPylate. This chain is Putative protein adenylyltransferase MJ0604, found in Methanocaldococcus jannaschii (strain ATCC 43067 / DSM 2661 / JAL-1 / JCM 10045 / NBRC 100440) (Methanococcus jannaschii).